Reading from the N-terminus, the 226-residue chain is Elongation factor 1-delta (226 aa).

Positions 82-131 (SSVATPPVADTKASAAEDDDDDDVDLFGEETEEEKKASEERAAAVKASGK) are disordered. A compositionally biased stretch (acidic residues) spans 97–113 (AEDDDDDDVDLFGEETE). Positions 114–124 (EEKKASEERAA) are enriched in basic and acidic residues.

The protein belongs to the EF-1-beta/EF-1-delta family. EF-1 is composed of 4 subunits: alpha, beta (1B-alpha=beta'), delta (1B-beta), and gamma (1B-gamma).

In terms of biological role, EF-1-beta and EF-1-beta' stimulate the exchange of GDP bound to EF-1-alpha to GTP. The polypeptide is Elongation factor 1-delta (Spuriopimpinella brachycarpa (Chamnamul)).